The sequence spans 241 residues: Pyridoxal phosphate phosphatase PHOSPHO2 (241 aa).

Asp8 acts as the Nucleophile in catalysis. Mg(2+)-binding residues include Asp8 and Asp10. Asp10 serves as the catalytic Proton donor. Substrate is bound by residues Asp19 and Asp99. Asp179 serves as a coordination point for Mg(2+).

It belongs to the HAD-like hydrolase superfamily. PHOSPHO family. The cofactor is Mg(2+).

It catalyses the reaction pyridoxal 5'-phosphate + H2O = pyridoxal + phosphate. Phosphatase that has high activity toward pyridoxal 5'-phosphate (PLP). Also active at much lower level toward pyrophosphate, phosphoethanolamine (PEA), phosphocholine (PCho), phospho-l-tyrosine, fructose-6-phosphate, p-nitrophenyl phosphate, and h-glycerophosphate. This chain is Pyridoxal phosphate phosphatase PHOSPHO2 (PHOSPHO2), found in Bos taurus (Bovine).